The following is a 496-amino-acid chain: Cytochrome P450 71D18 (496 aa).

The chain crosses the membrane as a helical; Signal-anchor for type II membrane protein span at residues 2-22; the sequence is ELDLLSAIIILVATYIVSLLI. Cysteine 436 contributes to the heme binding site.

Belongs to the cytochrome P450 family. Heme serves as cofactor.

Its subcellular location is the endoplasmic reticulum membrane. It carries out the reaction (4S)-limonene + reduced [NADPH--hemoprotein reductase] + O2 = (1S,5R)-carveol + oxidized [NADPH--hemoprotein reductase] + H2O + H(+). Functionally, hydroxylates (-)-(4S)-limonene to (-)-trans-carveol, a precursor of (-)-carvone. Fluorinated substrate analogs are hydroxylated with the same regio- and stereochemistry. The protein is Cytochrome P450 71D18 (CYP71D18) of Mentha gracilis (Gingermint).